The following is a 669-amino-acid chain: Elongation factor G-like protein (669 aa).

One can recognise a tr-type G domain in the interval 7–279 (ESLRNVAIVG…VLIKEAPDPS (273 aa)). The G1 stretch occupies residues 16-23 (GPYGSGKT). 16–23 (GPYGSGKT) serves as a coordination point for GTP. The segment at 59-63 (QMSVE) is G2. Positions 80 to 83 (DCPG) are G3. GTP contacts are provided by residues 80-84 (DCPGS) and 134-137 (NKMD). Residues 134 to 137 (NKMD) are G4. Residues 257-259 (AAE) form a G5 region.

The protein belongs to the TRAFAC class translation factor GTPase superfamily. Classic translation factor GTPase family. EF-G/EF-2 subfamily.

The sequence is that of Elongation factor G-like protein from Synechocystis sp. (strain ATCC 27184 / PCC 6803 / Kazusa).